We begin with the raw amino-acid sequence, 187 residues long: Large ribosomal subunit protein uL5 (187 aa).

The protein belongs to the universal ribosomal protein uL5 family. As to quaternary structure, part of the 50S ribosomal subunit; part of the 5S rRNA/L5/L18/L25 subcomplex. Contacts the 5S rRNA and the P site tRNA. Forms a bridge to the 30S subunit in the 70S ribosome.

This is one of the proteins that bind and probably mediate the attachment of the 5S RNA into the large ribosomal subunit, where it forms part of the central protuberance. In the 70S ribosome it contacts protein S13 of the 30S subunit (bridge B1b), connecting the 2 subunits; this bridge is implicated in subunit movement. Contacts the P site tRNA; the 5S rRNA and some of its associated proteins might help stabilize positioning of ribosome-bound tRNAs. The sequence is that of Large ribosomal subunit protein uL5 from Mycobacteroides abscessus (strain ATCC 19977 / DSM 44196 / CCUG 20993 / CIP 104536 / JCM 13569 / NCTC 13031 / TMC 1543 / L948) (Mycobacterium abscessus).